The primary structure comprises 359 residues: tRNA N6-adenosine threonylcarbamoyltransferase (359 aa).

Histidine 115 and histidine 119 together coordinate Fe cation. Substrate-binding positions include 137-141 (LVSGG), aspartate 170, glycine 183, and asparagine 283. Fe cation is bound at residue aspartate 311. Positions 328–359 (APDSLDIAPRSRWPLDEKSAPVFGTGRRGAKA) are disordered.

This sequence belongs to the KAE1 / TsaD family. Requires Fe(2+) as cofactor.

Its subcellular location is the cytoplasm. It catalyses the reaction L-threonylcarbamoyladenylate + adenosine(37) in tRNA = N(6)-L-threonylcarbamoyladenosine(37) in tRNA + AMP + H(+). In terms of biological role, required for the formation of a threonylcarbamoyl group on adenosine at position 37 (t(6)A37) in tRNAs that read codons beginning with adenine. Is involved in the transfer of the threonylcarbamoyl moiety of threonylcarbamoyl-AMP (TC-AMP) to the N6 group of A37, together with TsaE and TsaB. TsaD likely plays a direct catalytic role in this reaction. The polypeptide is tRNA N6-adenosine threonylcarbamoyltransferase (Brucella melitensis biotype 2 (strain ATCC 23457)).